The sequence spans 87 residues: MNLKVLFLLAMVLVTLCLGEDRVTDRRQLCKCCAKLCHEDRDRTIPCSGGNSQFCEFCKRTKQKIRKDCNTQNEAKALCVGYFTGEC.

Positions 1 to 21 (MNLKVLFLLAMVLVTLCLGED) are cleaved as a signal peptide. Positions 22–27 (RVTDRR) are excised as a propeptide.

The protein belongs to the teretoxin C (TC) superfamily. In terms of processing, contains 5 disulfide bonds. In terms of tissue distribution, expressed by the venom duct.

It is found in the secreted. The polypeptide is Tan_10cys (Terebra anilis (Auger snail)).